The sequence spans 283 residues: Glutamate racemase (283 aa).

Substrate contacts are provided by residues 28 to 29 and 60 to 61; these read DS and YG. The Proton donor/acceptor role is filled by C92. 93-94 serves as a coordination point for substrate; the sequence is NT. C204 acts as the Proton donor/acceptor in catalysis. 205–206 contributes to the substrate binding site; the sequence is TH.

This sequence belongs to the aspartate/glutamate racemases family.

The enzyme catalyses L-glutamate = D-glutamate. It participates in cell wall biogenesis; peptidoglycan biosynthesis. In terms of biological role, provides the (R)-glutamate required for cell wall biosynthesis. This Salmonella gallinarum (strain 287/91 / NCTC 13346) protein is Glutamate racemase.